A 145-amino-acid polypeptide reads, in one-letter code: MIALIQRVTRASVTVEDEVTGEIGPGLLVLLGVEKEDDEQKANRLCERVLGYRIFSDADGKMNLNVQQAGGSVLVVSQFTLAADTERGMRPSFSGGAAPDRAQALYEYFVERCRQQAIDTQTGRFAADMQVELVNDGPVTFWLQV.

The Gly-cisPro motif, important for rejection of L-amino acids signature appears at 137–138 (GP).

The protein belongs to the DTD family. As to quaternary structure, homodimer.

It is found in the cytoplasm. It carries out the reaction glycyl-tRNA(Ala) + H2O = tRNA(Ala) + glycine + H(+). The enzyme catalyses a D-aminoacyl-tRNA + H2O = a tRNA + a D-alpha-amino acid + H(+). Its function is as follows. An aminoacyl-tRNA editing enzyme that deacylates mischarged D-aminoacyl-tRNAs. Also deacylates mischarged glycyl-tRNA(Ala), protecting cells against glycine mischarging by AlaRS. Acts via tRNA-based rather than protein-based catalysis; rejects L-amino acids rather than detecting D-amino acids in the active site. By recycling D-aminoacyl-tRNA to D-amino acids and free tRNA molecules, this enzyme counteracts the toxicity associated with the formation of D-aminoacyl-tRNA entities in vivo and helps enforce protein L-homochirality. This chain is D-aminoacyl-tRNA deacylase, found in Salmonella enteritidis PT4 (strain P125109).